A 327-amino-acid polypeptide reads, in one-letter code: Tryptophan--tRNA ligase (327 aa).

ATP is bound by residues glutamine 9 to serine 11 and glycine 17 to asparagine 18. Residues proline 10 to asparagine 18 carry the 'HIGH' region motif. Residue aspartate 132 participates in L-tryptophan binding. ATP-binding positions include glycine 144–aspartate 146, isoleucine 183, and lysine 192–serine 196. Residues lysine 192–serine 196 carry the 'KMSKS' region motif.

It belongs to the class-I aminoacyl-tRNA synthetase family. In terms of assembly, homodimer.

The protein localises to the cytoplasm. It catalyses the reaction tRNA(Trp) + L-tryptophan + ATP = L-tryptophyl-tRNA(Trp) + AMP + diphosphate + H(+). Functionally, catalyzes the attachment of tryptophan to tRNA(Trp). The polypeptide is Tryptophan--tRNA ligase (Caldanaerobacter subterraneus subsp. tengcongensis (strain DSM 15242 / JCM 11007 / NBRC 100824 / MB4) (Thermoanaerobacter tengcongensis)).